The sequence spans 157 residues: Small ribosomal subunit protein uS7cz/uS7cy (157 aa).

This sequence belongs to the universal ribosomal protein uS7 family. In terms of assembly, part of the 30S ribosomal subunit.

The protein resides in the plastid. Its subcellular location is the chloroplast. Functionally, one of the primary rRNA binding proteins, it binds directly to 16S rRNA where it nucleates assembly of the head domain of the 30S subunit. In Welwitschia mirabilis (Tree tumbo), this protein is Small ribosomal subunit protein uS7cz/uS7cy (rps7-A).